A 376-amino-acid polypeptide reads, in one-letter code: Lipid-A-disaccharide synthase (376 aa).

Belongs to the LpxB family.

It catalyses the reaction a lipid X + a UDP-2-N,3-O-bis[(3R)-3-hydroxyacyl]-alpha-D-glucosamine = a lipid A disaccharide + UDP + H(+). It participates in bacterial outer membrane biogenesis; LPS lipid A biosynthesis. Condensation of UDP-2,3-diacylglucosamine and 2,3-diacylglucosamine-1-phosphate to form lipid A disaccharide, a precursor of lipid A, a phosphorylated glycolipid that anchors the lipopolysaccharide to the outer membrane of the cell. This is Lipid-A-disaccharide synthase from Hydrogenovibrio crunogenus (strain DSM 25203 / XCL-2) (Thiomicrospira crunogena).